Reading from the N-terminus, the 440-residue chain is Ribulose bisphosphate carboxylase large chain (440 aa).

An N6,N6,N6-trimethyllysine modification is found at K4. 2 residues coordinate substrate: N113 and T163. K165 functions as the Proton acceptor in the catalytic mechanism. K167 is a binding site for substrate. Mg(2+) contacts are provided by K191, D193, and E194. At K191 the chain carries N6-carboxylysine. H284 functions as the Proton acceptor in the catalytic mechanism. 3 residues coordinate substrate: R285, H317, and S369.

Belongs to the RuBisCO large chain family. Type I subfamily. In terms of assembly, heterohexadecamer of 8 large chains and 8 small chains; disulfide-linked. The disulfide link is formed within the large subunit homodimers. Mg(2+) serves as cofactor. The disulfide bond which can form in the large chain dimeric partners within the hexadecamer appears to be associated with oxidative stress and protein turnover.

Its subcellular location is the plastid. The protein localises to the chloroplast. The catalysed reaction is 2 (2R)-3-phosphoglycerate + 2 H(+) = D-ribulose 1,5-bisphosphate + CO2 + H2O. It carries out the reaction D-ribulose 1,5-bisphosphate + O2 = 2-phosphoglycolate + (2R)-3-phosphoglycerate + 2 H(+). In terms of biological role, ruBisCO catalyzes two reactions: the carboxylation of D-ribulose 1,5-bisphosphate, the primary event in carbon dioxide fixation, as well as the oxidative fragmentation of the pentose substrate in the photorespiration process. Both reactions occur simultaneously and in competition at the same active site. The polypeptide is Ribulose bisphosphate carboxylase large chain (Onoclea sensibilis (Sensitive fern)).